We begin with the raw amino-acid sequence, 85 residues long: Large ribosomal subunit protein bL31B (85 aa).

Belongs to the bacterial ribosomal protein bL31 family. Type B subfamily. As to quaternary structure, part of the 50S ribosomal subunit.

The protein is Large ribosomal subunit protein bL31B of Staphylococcus saprophyticus subsp. saprophyticus (strain ATCC 15305 / DSM 20229 / NCIMB 8711 / NCTC 7292 / S-41).